Here is a 214-residue protein sequence, read N- to C-terminus: Probable GTP-binding protein EngB (214 aa).

One can recognise an EngB-type G domain in the interval H22–P194. GTP-binding positions include G30–S37, G57–L61, D75–G78, T142–D145, and F173–A175. Mg(2+)-binding residues include S37 and T59. The disordered stretch occupies residues T195–D214. The segment covering P203 to D214 has biased composition (pro residues).

This sequence belongs to the TRAFAC class TrmE-Era-EngA-EngB-Septin-like GTPase superfamily. EngB GTPase family. Mg(2+) is required as a cofactor.

Its function is as follows. Necessary for normal cell division and for the maintenance of normal septation. The protein is Probable GTP-binding protein EngB of Geobacter sp. (strain M21).